The primary structure comprises 388 residues: Succinate--CoA ligase [ADP-forming] subunit beta (388 aa).

In terms of domain architecture, ATP-grasp spans 9–244 (KQLFAEYGLP…PSQDDPREAH (236 aa)). ATP is bound by residues K46, 53 to 55 (GRG), E99, T102, and E107. Mg(2+)-binding residues include N199 and D213. Substrate contacts are provided by residues N264 and 321–323 (GIV).

This sequence belongs to the succinate/malate CoA ligase beta subunit family. As to quaternary structure, heterotetramer of two alpha and two beta subunits. Mg(2+) is required as a cofactor.

The enzyme catalyses succinate + ATP + CoA = succinyl-CoA + ADP + phosphate. It catalyses the reaction GTP + succinate + CoA = succinyl-CoA + GDP + phosphate. Its pathway is carbohydrate metabolism; tricarboxylic acid cycle; succinate from succinyl-CoA (ligase route): step 1/1. In terms of biological role, succinyl-CoA synthetase functions in the citric acid cycle (TCA), coupling the hydrolysis of succinyl-CoA to the synthesis of either ATP or GTP and thus represents the only step of substrate-level phosphorylation in the TCA. The beta subunit provides nucleotide specificity of the enzyme and binds the substrate succinate, while the binding sites for coenzyme A and phosphate are found in the alpha subunit. This chain is Succinate--CoA ligase [ADP-forming] subunit beta, found in Pseudomonas fluorescens (strain Pf0-1).